Here is a 150-residue protein sequence, read N- to C-terminus: Plasmin C (150 aa).

Residues 1–14 form the signal peptide; that stretch reads MRSFFLLCALVAVC.

The polypeptide is Plasmin C (PLSC) (Physarum polycephalum (Slime mold)).